The primary structure comprises 255 residues: Anamorsin homolog (255 aa).

Residues 1-163 (MPKETLVVSK…VRPNWKSKTD (163 aa)) are N-terminal SAM-like domain. The segment at 164–185 (KKSPSMIDAAPIDGYISKAPDY) is linker. The [2Fe-2S] cluster site is built by Cys188, Cys195, Cys198, and Cys200. The interval 188–200 (CSTKPRACANCTC) is fe-S binding site A. Residues Cys224, Cys227, Cys235, and Cys238 each contribute to the [4Fe-4S] cluster site. 2 short sequence motifs (cx2C motif) span residues 224–227 (CGNC) and 235–238 (CESC). Residues 224-238 (CGNCYLGDAFRCESC) form a fe-S binding site B region.

The protein belongs to the anamorsin family. As to quaternary structure, monomer. The cofactor is [2Fe-2S] cluster. Requires [4Fe-4S] cluster as cofactor.

Its subcellular location is the cytoplasm. The protein resides in the mitochondrion intermembrane space. In terms of biological role, component of the cytosolic iron-sulfur (Fe-S) protein assembly (CIA) machinery. Required for the maturation of extramitochondrial Fe-S proteins. Part of an electron transfer chain functioning in an early step of cytosolic Fe-S biogenesis, facilitating the de novo assembly of a [4Fe-4S] cluster on the cytosolic Fe-S scaffold complex. Electrons are transferred from NADPH via a FAD- and FMN-containing diflavin oxidoreductase. Together with the diflavin oxidoreductase, also required for the assembly of the diferric tyrosyl radical cofactor of ribonucleotide reductase (RNR), probably by providing electrons for reduction during radical cofactor maturation in the catalytic small subunit. This chain is Anamorsin homolog, found in Theileria annulata.